Here is an 876-residue protein sequence, read N- to C-terminus: Alanine--tRNA ligase (876 aa).

Zn(2+) is bound by residues His564, His568, Cys666, and His670.

It belongs to the class-II aminoacyl-tRNA synthetase family. As to quaternary structure, homotetramer. It depends on Zn(2+) as a cofactor.

It localises to the cytoplasm. It carries out the reaction tRNA(Ala) + L-alanine + ATP = L-alanyl-tRNA(Ala) + AMP + diphosphate. Catalyzes the attachment of alanine to tRNA(Ala) in a two-step reaction: alanine is first activated by ATP to form Ala-AMP and then transferred to the acceptor end of tRNA(Ala). Also edits incorrectly charged Ser-tRNA(Ala) and Gly-tRNA(Ala) via its editing domain. This Salmonella typhi protein is Alanine--tRNA ligase.